We begin with the raw amino-acid sequence, 100 residues long: Small ribosomal subunit protein uS14c (100 aa).

The protein belongs to the universal ribosomal protein uS14 family. In terms of assembly, part of the 30S ribosomal subunit.

The protein resides in the plastid. The protein localises to the chloroplast. In terms of biological role, binds 16S rRNA, required for the assembly of 30S particles. The sequence is that of Small ribosomal subunit protein uS14c from Calycanthus floridus var. glaucus (Eastern sweetshrub).